The following is a 143-amino-acid chain: Nucleoside diphosphate kinase (143 aa).

ATP contacts are provided by Lys11, Phe59, Arg87, Thr93, Arg104, and Asn114. Residue His117 is the Pros-phosphohistidine intermediate of the active site.

It belongs to the NDK family. In terms of assembly, homotetramer. It depends on Mg(2+) as a cofactor.

It localises to the cytoplasm. The catalysed reaction is a 2'-deoxyribonucleoside 5'-diphosphate + ATP = a 2'-deoxyribonucleoside 5'-triphosphate + ADP. The enzyme catalyses a ribonucleoside 5'-diphosphate + ATP = a ribonucleoside 5'-triphosphate + ADP. Functionally, major role in the synthesis of nucleoside triphosphates other than ATP. The ATP gamma phosphate is transferred to the NDP beta phosphate via a ping-pong mechanism, using a phosphorylated active-site intermediate. In Shewanella sp. (strain MR-4), this protein is Nucleoside diphosphate kinase.